We begin with the raw amino-acid sequence, 450 residues long: Keratin, type I cytoskeletal 25 (450 aa).

Residues 1-24 are disordered; that stretch reads MSLRLPSGSRRAGPRPTTGSLRLS. A head region spans residues 1 to 78; the sequence is MSLRLPSGSR…MNEGGLLSGN (78 aa). The coil 1A stretch occupies residues 79-114; that stretch reads EKVTMQNLNDRLASYLENVRALEEANADLEQKIKGW. One can recognise an IF rod domain in the interval 79 to 394; it reads EKVTMQNLND…LLIGGDDGAC (316 aa). The tract at residues 115–136 is linker 1; that stretch reads YEKFGPGSCRGLDHDYSRYLPI. The tract at residues 137-228 is coil 1B; it reads IEDLKNQIIA…KNHKEEMQVL (92 aa). Residues 229-251 form a linker 12 region; it reads QCAAGGNVNVEMNAAPGVDLTVL. Positions 252 to 390 are coil 2; sequence LNNMRAEYEA…ETYCLLIGGD (139 aa). A tail region spans residues 391–450; the sequence is DGACKSGGYKSKDYAAGNMGNQMKDPIRAIVVKKVLEEVDQRSKVLTTRLHSLEEKSQSN. S442 carries the phosphoserine modification.

This sequence belongs to the intermediate filament family. In terms of assembly, heterodimer of a type I and a type II keratin. Heterodimer with type II keratin KRT5 leading to the formation of keratin intermediate filament (KIF) network. Interacts with KRT6A to form filaments. In terms of tissue distribution, expressed in skin and wool follicle. Expression localized to the inner root sheath of wool follicle.

Its subcellular location is the cytoplasm. Essential for the proper assembly of type I and type II keratin protein complexes and formation of keratin intermediate filaments in the inner root sheath (irs). Plays a role in the cytoskeleton organization. In Ovis aries (Sheep), this protein is Keratin, type I cytoskeletal 25.